The following is a 299-amino-acid chain: Ribosomal protein L11 methyltransferase (299 aa).

4 residues coordinate S-adenosyl-L-methionine: threonine 139, glycine 163, aspartate 185, and asparagine 232.

This sequence belongs to the methyltransferase superfamily. PrmA family.

The protein resides in the cytoplasm. The catalysed reaction is L-lysyl-[protein] + 3 S-adenosyl-L-methionine = N(6),N(6),N(6)-trimethyl-L-lysyl-[protein] + 3 S-adenosyl-L-homocysteine + 3 H(+). Functionally, methylates ribosomal protein L11. This is Ribosomal protein L11 methyltransferase from Crocosphaera subtropica (strain ATCC 51142 / BH68) (Cyanothece sp. (strain ATCC 51142)).